Reading from the N-terminus, the 81-residue chain is Defensin-like protein 43 (81 aa).

The N-terminal stretch at 1-27 is a signal peptide; the sequence is MGITKTSVTFLFLLILAAFVSNYNVLA. 4 disulfide bridges follow: Cys-40–Cys-79, Cys-44–Cys-67, Cys-53–Cys-77, and Cys-57–Cys-78.

This sequence belongs to the DEFL family.

Its subcellular location is the secreted. The polypeptide is Defensin-like protein 43 (Arabidopsis thaliana (Mouse-ear cress)).